An 874-amino-acid chain; its full sequence is Alanine--tRNA ligase (874 aa).

His-564, His-568, Cys-665, and His-669 together coordinate Zn(2+).

It belongs to the class-II aminoacyl-tRNA synthetase family. Requires Zn(2+) as cofactor.

It localises to the cytoplasm. The enzyme catalyses tRNA(Ala) + L-alanine + ATP = L-alanyl-tRNA(Ala) + AMP + diphosphate. Functionally, catalyzes the attachment of alanine to tRNA(Ala) in a two-step reaction: alanine is first activated by ATP to form Ala-AMP and then transferred to the acceptor end of tRNA(Ala). Also edits incorrectly charged Ser-tRNA(Ala) and Gly-tRNA(Ala) via its editing domain. The sequence is that of Alanine--tRNA ligase from Burkholderia pseudomallei (strain 668).